A 191-amino-acid chain; its full sequence is MLSLHQLQFKNLFDLNITFLPSSITYIKGANGCGKSSLLRMIAGIMQPSSGHIYYRNCNINNIAKLYCTYIGHNLGLKSEMTVFENLKFWSEIYNSAATVYAAIHYFKLHDLLDKKCYSLSSGMQKIVAIARLIACQSDLWLLDEVETNLSKENRALLNNLIVMKANSGGIVLLSSHLESSIKSAQILRID.

Residues 2–190 enclose the ABC transporter domain; the sequence is LSLHQLQFKN…SIKSAQILRI (189 aa). An ATP-binding site is contributed by 29–36; the sequence is GANGCGKS.

It belongs to the ABC transporter superfamily. CcmA exporter (TC 3.A.1.107) family. In terms of assembly, the complex is composed of two ATP-binding proteins (CcmA) and two transmembrane proteins (CcmB).

The protein resides in the cell inner membrane. The enzyme catalyses heme b(in) + ATP + H2O = heme b(out) + ADP + phosphate + H(+). In terms of biological role, part of the ABC transporter complex CcmAB involved in the biogenesis of c-type cytochromes; once thought to export heme, this seems not to be the case, but its exact role is uncertain. Responsible for energy coupling to the transport system. The protein is Cytochrome c biogenesis ATP-binding export protein CcmA of Rickettsia conorii (strain ATCC VR-613 / Malish 7).